We begin with the raw amino-acid sequence, 350 residues long: Beta-ketoacyl-[acyl-carrier-protein] synthase III (350 aa).

Residues cysteine 120 and histidine 256 contribute to the active site. Residues 257–261 form an ACP-binding region; it reads QANVR. Asparagine 286 is an active-site residue.

Belongs to the thiolase-like superfamily. FabH family. In terms of assembly, homodimer.

It is found in the cytoplasm. The catalysed reaction is malonyl-[ACP] + acetyl-CoA + H(+) = 3-oxobutanoyl-[ACP] + CO2 + CoA. The protein operates within lipid metabolism; fatty acid biosynthesis. Functionally, catalyzes the condensation reaction of fatty acid synthesis by the addition to an acyl acceptor of two carbons from malonyl-ACP. Catalyzes the first condensation reaction which initiates fatty acid synthesis and may therefore play a role in governing the total rate of fatty acid production. Possesses both acetoacetyl-ACP synthase and acetyl transacylase activities. Its substrate specificity determines the biosynthesis of branched-chain and/or straight-chain of fatty acids. In Deinococcus deserti (strain DSM 17065 / CIP 109153 / LMG 22923 / VCD115), this protein is Beta-ketoacyl-[acyl-carrier-protein] synthase III.